The primary structure comprises 122 residues: uncharacterized protein (122 aa).

The segment covering 79–90 has biased composition (polar residues); that stretch reads NERVTSRVTNSR. Positions 79–122 are disordered; it reads NERVTSRVTNSRTESESNGNGNATGNTSSNANSNGNANGIYIRK. A compositionally biased stretch (low complexity) spans 94 to 122; it reads ESNGNGNATGNTSSNANSNGNANGIYIRK.

This is an uncharacterized protein from Leptolyngbya boryana (Plectonema boryanum).